Consider the following 358-residue polypeptide: MSKIFDFVKPGVIFGDDVQKVFQVAKENKFALPAVNCVGTDSINAVMEAAAKVRAPIIVQFSNGGAAFIAGKGLKLEGQQGAILGAIAGAHHVHQMAEYYGVPVILHTDHCAKKLLPWLDGLLDAGEKHFAATGKPLFSSHMIDLSEESLEENIEICSQYLARMSKIGMTLELELGCTGGEEDGVDNSHLDNSALYTQPEDVDYAFTKLSAISPRFTIAASFGNVHGVYKPGNVQLTPVILKNSQEYVSKKHNLPHNSLNFVFHGGSGSTAAEIKEAVSYGVVKMNIDTDTQWATWEGVLKYYKKNEGYLQGQLGNPEGDDKPNKKYYDPRVWLRAAQTGMIERLEQAFKELNCIDVL.

Ser62 provides a ligand contact to D-glyceraldehyde 3-phosphate. The Proton donor role is filled by Asp109. 4 residues coordinate Zn(2+): His110, Asp144, Glu174, and His226. Residue Gly227 coordinates dihydroxyacetone phosphate. Residue His264 participates in Zn(2+) binding. Dihydroxyacetone phosphate-binding positions include Gly265 to Ser267 and Asn286 to Thr289.

It belongs to the class II fructose-bisphosphate aldolase family. Zn(2+) is required as a cofactor.

It carries out the reaction beta-D-fructose 1,6-bisphosphate = D-glyceraldehyde 3-phosphate + dihydroxyacetone phosphate. The protein operates within carbohydrate degradation; glycolysis; D-glyceraldehyde 3-phosphate and glycerone phosphate from D-glucose: step 4/4. Catalyzes the aldol condensation of dihydroxyacetone phosphate (DHAP or glycerone-phosphate) with glyceraldehyde 3-phosphate (G3P) to form fructose 1,6-bisphosphate (FBP) in gluconeogenesis and the reverse reaction in glycolysis. This Edwardsiella ictaluri (strain 93-146) protein is Fructose-bisphosphate aldolase (fba).